Reading from the N-terminus, the 105-residue chain is DNA-directed RNA polymerase subunit omega (105 aa).

This sequence belongs to the RNA polymerase subunit omega family. As to quaternary structure, the RNAP catalytic core consists of 2 alpha, 1 beta, 1 beta' and 1 omega subunit. When a sigma factor is associated with the core the holoenzyme is formed, which can initiate transcription.

It catalyses the reaction RNA(n) + a ribonucleoside 5'-triphosphate = RNA(n+1) + diphosphate. Functionally, promotes RNA polymerase assembly. Latches the N- and C-terminal regions of the beta' subunit thereby facilitating its interaction with the beta and alpha subunits. The polypeptide is DNA-directed RNA polymerase subunit omega (Streptococcus uberis (strain ATCC BAA-854 / 0140J)).